Reading from the N-terminus, the 135-residue chain is Small ribosomal subunit protein bS6 (135 aa).

The span at 99-120 (QHSSLGRSTAPANPMASNTPRT) shows a compositional bias: polar residues. The segment at 99-135 (QHSSLGRSTAPANPMASNTPRTEGQEQAKTEPQTAPA) is disordered.

The protein belongs to the bacterial ribosomal protein bS6 family.

Binds together with bS18 to 16S ribosomal RNA. The protein is Small ribosomal subunit protein bS6 of Synechococcus sp. (strain RCC307).